The following is a 199-amino-acid chain: Thymidine kinase (199 aa).

Residues 23-30 and 95-98 each bind ATP; these read GSMFSGKT and DEAQ. E96 (proton acceptor) is an active-site residue. C152, C155, C184, and C187 together coordinate Zn(2+).

This sequence belongs to the thymidine kinase family. In terms of assembly, homotetramer.

It localises to the cytoplasm. It catalyses the reaction thymidine + ATP = dTMP + ADP + H(+). The chain is Thymidine kinase from Bacteroides fragilis (strain ATCC 25285 / DSM 2151 / CCUG 4856 / JCM 11019 / LMG 10263 / NCTC 9343 / Onslow / VPI 2553 / EN-2).